The following is a 597-amino-acid chain: DNA primase (597 aa).

Residues cysteine 40, histidine 43, cysteine 61, and cysteine 64 each coordinate Zn(2+). The CHC2-type zinc finger occupies 40–64; sequence CPFHGEKTPSFSVSPEKQIFHCFGC. Residues 262-342 enclose the Toprim domain; sequence QEALLVEGFA…RVKVASLPNG (81 aa). Mg(2+)-binding residues include glutamate 268, aspartate 311, and aspartate 313. A compositionally biased stretch (basic and acidic residues) spans 429-447; sequence LSRSQRERTKPREAPDGET. The segment at 429–448 is disordered; that stretch reads LSRSQRERTKPREAPDGETA.

The protein belongs to the DnaG primase family. In terms of assembly, monomer. Interacts with replicative helicase DnaB, as DnaB(6):DnaG(3). A stable complex DnaI(6):DnaB(6):DnaG(3) fragment can be isolated; DnaI and DnaG do not contact each other (DnaI in this complex is derived from B.subtilis). Zn(2+) is required as a cofactor. Mg(2+) serves as cofactor.

It carries out the reaction ssDNA + n NTP = ssDNA/pppN(pN)n-1 hybrid + (n-1) diphosphate.. In terms of biological role, RNA polymerase that catalyzes the synthesis of short RNA molecules used as primers for DNA polymerase during DNA replication. This is DNA primase from Geobacillus stearothermophilus (Bacillus stearothermophilus).